Reading from the N-terminus, the 269-residue chain is MALEKIIRESLTGFLQCHIAHADLSALDEVFCAYVTGVLEELGSQNSSEEDFEMESFVEMLEGYIPGFSEISSEKVYDMLFELSGRLSEARGTENVSPNPTVEVSFMTPASPSEKTATEPLEGAVAQDKDDPKTGVDLLLEIFPSCTITQAQTALSMAKGDLEDAVQIIVDGKVIADNHSGSKDMQGAPKIEDLKDFILQKYMLVDTEDDKKTYRPVAPKEAPKKMIRYIDNQVVSTKGERYKDIKKPESEEMKKTYINLKPARKYKFH.

Residues 110-130 (ASPSEKTATEPLEGAVAQDKD) are disordered. In terms of domain architecture, CUE spans 131 to 174 (DPKTGVDLLLEIFPSCTITQAQTALSMAKGDLEDAVQIIVDGKV).

Belongs to the CUEDC2 family. Phosphorylated.

The protein resides in the cytoplasm. It is found in the nucleus. Functionally, may play a role in targeting proteins for ubiquitination and subsequent proteasomal degradation. The protein is CUE domain-containing protein 2-B (cuedc2-b) of Xenopus laevis (African clawed frog).